The primary structure comprises 264 residues: S-adenosylmethionine decarboxylase proenzyme (264 aa).

Residue S112 is the Schiff-base intermediate with substrate; via pyruvic acid of the active site. At S112 the chain carries Pyruvic acid (Ser); by autocatalysis. Residue H117 is the Proton acceptor; for processing activity of the active site. C140 serves as the catalytic Proton donor; for catalytic activity.

The protein belongs to the prokaryotic AdoMetDC family. Type 2 subfamily. Heterooctamer of four alpha and four beta chains arranged as a tetramer of alpha/beta heterodimers. Requires pyruvate as cofactor. Is synthesized initially as an inactive proenzyme. Formation of the active enzyme involves a self-maturation process in which the active site pyruvoyl group is generated from an internal serine residue via an autocatalytic post-translational modification. Two non-identical subunits are generated from the proenzyme in this reaction, and the pyruvate is formed at the N-terminus of the alpha chain, which is derived from the carboxyl end of the proenzyme. The post-translation cleavage follows an unusual pathway, termed non-hydrolytic serinolysis, in which the side chain hydroxyl group of the serine supplies its oxygen atom to form the C-terminus of the beta chain, while the remainder of the serine residue undergoes an oxidative deamination to produce ammonia and the pyruvoyl group blocking the N-terminus of the alpha chain.

It carries out the reaction S-adenosyl-L-methionine + H(+) = S-adenosyl 3-(methylsulfanyl)propylamine + CO2. The protein operates within amine and polyamine biosynthesis; S-adenosylmethioninamine biosynthesis; S-adenosylmethioninamine from S-adenosyl-L-methionine: step 1/1. Functionally, catalyzes the decarboxylation of S-adenosylmethionine to S-adenosylmethioninamine (dcAdoMet), the propylamine donor required for the synthesis of the polyamines spermine and spermidine from the diamine putrescine. This is S-adenosylmethionine decarboxylase proenzyme from Escherichia coli O45:K1 (strain S88 / ExPEC).